The sequence spans 905 residues: Protein translocase subunit SecA (905 aa).

ATP-binding positions include Q87, 105–109 (GEGKT), and D512. Positions 836-905 (DVDAVDEQRK…KKYKHCHGKL (70 aa)) are disordered. A compositionally biased stretch (basic and acidic residues) spans 841 to 858 (DEQRKAADSAPREFRHEQ). Residues C890, C892, C901, and H902 each coordinate Zn(2+). Residues 896–905 (KKYKHCHGKL) show a composition bias toward basic residues.

This sequence belongs to the SecA family. In terms of assembly, monomer and homodimer. Part of the essential Sec protein translocation apparatus which comprises SecA, SecYEG and auxiliary proteins SecDF-YajC and YidC. Zn(2+) serves as cofactor.

It is found in the cell inner membrane. The protein resides in the cytoplasm. The catalysed reaction is ATP + H2O + cellular proteinSide 1 = ADP + phosphate + cellular proteinSide 2.. Its function is as follows. Part of the Sec protein translocase complex. Interacts with the SecYEG preprotein conducting channel. Has a central role in coupling the hydrolysis of ATP to the transfer of proteins into and across the cell membrane, serving both as a receptor for the preprotein-SecB complex and as an ATP-driven molecular motor driving the stepwise translocation of polypeptide chains across the membrane. This Idiomarina loihiensis (strain ATCC BAA-735 / DSM 15497 / L2-TR) protein is Protein translocase subunit SecA.